The primary structure comprises 443 residues: MKEIFSHNRPDKLLLIDAPADALVLVPGEYAIVRFDGVEDVRADPTVLDSLRFGTVTLTNLRLAWNSRGDPNGHSISVGLSTITKISVGNLHRDRQQKVAGLEESVPPDNGLFITGNRSVVLHATFNQLGYKFELKPSSREFTQQNSNFFNILQAVYRAHDTTRMYRRVRVRSSIVRDGQPILLSREVILSSISNIGLVSAIGVSNVLGVFVRTSHRIIWFSPANESYNVSIPYVDVLSLSLKEIKGSDDKLLVFSIPANDNMKEFLSPCNELDRKTLRAKEHRGKGLSSYSIATFAFDVQKATPSVPIQSLAQSVLISIQKAQAQPDYGVEIKAQGSVDEASALVSSEQSPGGFGVQAGVEVVKTGPQTNSKDGSKVLKIIQAVASRTNFAARYIVSSSCAPGHVDGKDGGSGKLTMTLDDVLGVAFQSVPGIDSIGDLWSL.

The protein belongs to the BBS5 family.

Its subcellular location is the cytoplasm. The protein localises to the cytoskeleton. It is found in the flagellum axoneme. The protein is BBSome complex member BBS5 homolog of Giardia intestinalis (strain ATCC 50803 / WB clone C6) (Giardia lamblia).